Reading from the N-terminus, the 374-residue chain is Succinyl-diaminopimelate desuccinylase (374 aa).

Histidine 66 provides a ligand contact to Zn(2+). Residue aspartate 68 is part of the active site. Position 99 (aspartate 99) interacts with Zn(2+). Glutamate 133 functions as the Proton acceptor in the catalytic mechanism. Zn(2+) is bound by residues glutamate 134, glutamate 162, and histidine 348.

Belongs to the peptidase M20A family. DapE subfamily. In terms of assembly, homodimer. Zn(2+) serves as cofactor. Requires Co(2+) as cofactor.

It carries out the reaction N-succinyl-(2S,6S)-2,6-diaminopimelate + H2O = (2S,6S)-2,6-diaminopimelate + succinate. Its pathway is amino-acid biosynthesis; L-lysine biosynthesis via DAP pathway; LL-2,6-diaminopimelate from (S)-tetrahydrodipicolinate (succinylase route): step 3/3. Its function is as follows. Catalyzes the hydrolysis of N-succinyl-L,L-diaminopimelic acid (SDAP), forming succinate and LL-2,6-diaminopimelate (DAP), an intermediate involved in the bacterial biosynthesis of lysine and meso-diaminopimelic acid, an essential component of bacterial cell walls. In Coxiella burnetii (strain RSA 331 / Henzerling II), this protein is Succinyl-diaminopimelate desuccinylase.